Here is a 350-residue protein sequence, read N- to C-terminus: Very-long-chain 3-oxoacyl-CoA reductase (350 aa).

Residues 20 to 40 (ALLFSLLFGVFKLTTFTLRFA) form a helical membrane-spanning segment. NADP(+)-binding residues include Val66, Asp120, Asn147, Tyr221, Lys225, Val254, and Ser256. The Proton donor role is filled by Tyr221. Lys225 (lowers pKa of active site Tyr) is an active-site residue.

The protein belongs to the short-chain dehydrogenases/reductases (SDR) family.

It is found in the endoplasmic reticulum membrane. It catalyses the reaction a very-long-chain (3R)-3-hydroxyacyl-CoA + NADP(+) = a very-long-chain 3-oxoacyl-CoA + NADPH + H(+). It functions in the pathway lipid metabolism; fatty acid biosynthesis. In terms of biological role, component of the microsomal membrane bound fatty acid elongation system, which produces the 26-carbon very long-chain fatty acids (VLCFA) from palmitate. Catalyzes the reduction of the 3-ketoacyl-CoA intermediate that is formed in each cycle of fatty acid elongation. VLCFAs serve as precursors for ceramide and sphingolipids. In Lodderomyces elongisporus (strain ATCC 11503 / CBS 2605 / JCM 1781 / NBRC 1676 / NRRL YB-4239) (Yeast), this protein is Very-long-chain 3-oxoacyl-CoA reductase.